The primary structure comprises 216 residues: GTP cyclohydrolase 1 2 (216 aa).

Belongs to the GTP cyclohydrolase I family. In terms of assembly, homomer.

The enzyme catalyses GTP + H2O = 7,8-dihydroneopterin 3'-triphosphate + formate + H(+). It participates in cofactor biosynthesis; 7,8-dihydroneopterin triphosphate biosynthesis; 7,8-dihydroneopterin triphosphate from GTP: step 1/1. This chain is GTP cyclohydrolase 1 2 (folE2), found in Nostoc sp. (strain PCC 7120 / SAG 25.82 / UTEX 2576).